Here is a 762-residue protein sequence, read N- to C-terminus: MELEEQKKYFHGTLEITIFDATPFSPPFPFNCICTKPKAAYVTIKINKKKVAKTSSEYDRIWNQTFQILCAHPVTDTTITITLKTRCSVLGRFRISAEQILTSNSAVINGFFPLIADNGSTKRNLKLKCLMWFRPAYLEPGWCRALEEASFQGIRNASFPQRSNCRVVLYQDAHHKATFDPRVDDVPFNARNLWEDVYKAIESARHLVYIAGWALNPNLVLVRDNETEIPHAVGVTVGELLKRKSEEGVAVRVMLWNDETSLPMIKNKGVMRTNVERALAYFRNTNVVCRLCPRLHKKLPTAFAHHQKTITLDTRVTNSSTKEREIMSFLGGFDLCDGRYDTEEHSLFRTLGTEADFYQTSVAGAKLSRGGPREPWHDCHVSVVGGAAWDVLKNFEQRWTKQCNPSVLVNTSGIRNLVNLTGPTEENNRKWNVQVLRSIDHISATEMPRGLPVEKSVHDGYVAAIRKAERFIYIENQYFMGSCDHWESKNDKICSGCTNLIPVEIALKIAAKIRARERFAVYIVIPMWPEGPPESETVEEILHWTRETMSMMYQIIGEAIWEVGDKSHPRDYLNFFCLANREEKRDGEFEAVSSPHQKTHYWNAQRNRRFMVYVHSKLMIVDDTYILIGSANINQRSMDGCRDTEIAIGCYQTNTNNTNEIQAYRLSLWYEHTGGKITADDLSSSEPESLECVRGLRTIGEQMWEIYSGDKVVDMLGIHLVAYPISVTGDGAVEEVGDGCFPDTKTLVKGKRSKMFPPVLTT.

In terms of domain architecture, C2 spans 1–116; sequence MELEEQKKYF…VINGFFPLIA (116 aa). D172 contacts Ca(2+). The PLD phosphodiesterase 1 domain maps to 301–339; sequence TAFAHHQKTITLDTRVTNSSTKEREIMSFLGGFDLCDGR. Active-site residues include H306, K308, and D313. H306 is a binding site for a 1,2-diacyl-sn-glycero-3-phosphate. Ca(2+) is bound by residues H345 and H377. A 1,2-diacyl-sn-glycero-3-phosphate contacts are provided by Q477 and H615. A PLD phosphodiesterase 2 domain is found at 610–637; it reads FMVYVHSKLMIVDDTYILIGSANINQRS. Active-site residues include H615, K617, and D622. Residue E671 coordinates Ca(2+).

The protein belongs to the phospholipase D family. C2-PLD subfamily. It depends on Ca(2+) as a cofactor. As to expression, expressed in roots, leaves, stems, siliques,flowers and inflorescences.

It is found in the cell membrane. The enzyme catalyses a 1,2-diacyl-sn-glycero-3-phosphocholine + H2O = a 1,2-diacyl-sn-glycero-3-phosphate + choline + H(+). Functionally, hydrolyzes glycerol-phospholipids at the terminal phosphodiesteric bond to generate phosphatidic acids (PA). Promotes growth and plays a role in nitrogen signaling. This chain is Phospholipase D alpha 4, found in Arabidopsis thaliana (Mouse-ear cress).